A 444-amino-acid chain; its full sequence is CCA-adding enzyme (444 aa).

Residues Ser-57 and Arg-60 each contribute to the ATP site. Ser-57 and Arg-60 together coordinate CTP. Residues Asp-69, Asp-71, and Asp-124 each coordinate Mg(2+). 3 residues coordinate ATP: His-147, Lys-168, and Tyr-177. Positions 147, 168, and 177 each coordinate CTP.

This sequence belongs to the tRNA nucleotidyltransferase/poly(A) polymerase family. Archaeal CCA-adding enzyme subfamily. Homodimer. The cofactor is Mg(2+).

It carries out the reaction a tRNA precursor + 2 CTP + ATP = a tRNA with a 3' CCA end + 3 diphosphate. It catalyses the reaction a tRNA with a 3' CCA end + 2 CTP + ATP = a tRNA with a 3' CCACCA end + 3 diphosphate. Catalyzes the addition and repair of the essential 3'-terminal CCA sequence in tRNAs without using a nucleic acid template. Adds these three nucleotides in the order of C, C, and A to the tRNA nucleotide-73, using CTP and ATP as substrates and producing inorganic pyrophosphate. tRNA 3'-terminal CCA addition is required both for tRNA processing and repair. Also involved in tRNA surveillance by mediating tandem CCA addition to generate a CCACCA at the 3' terminus of unstable tRNAs. While stable tRNAs receive only 3'-terminal CCA, unstable tRNAs are marked with CCACCA and rapidly degraded. The protein is CCA-adding enzyme of Methanococcus maripaludis (strain DSM 14266 / JCM 13030 / NBRC 101832 / S2 / LL).